The following is a 445-amino-acid chain: Tubulin beta-9 chain (445 aa).

The GTP site is built by Q11, E69, S138, G142, T143, G144, N204, and N226. A Mg(2+)-binding site is contributed by E69. Residues 423 to 445 (QQYQDATADDEEYEEEEEYEAEA) are disordered. Over residues 429–445 (TADDEEYEEEEEYEAEA) the composition is skewed to acidic residues.

This sequence belongs to the tubulin family. In terms of assembly, dimer of alpha and beta chains. A typical microtubule is a hollow water-filled tube with an outer diameter of 25 nm and an inner diameter of 15 nM. Alpha-beta heterodimers associate head-to-tail to form protofilaments running lengthwise along the microtubule wall with the beta-tubulin subunit facing the microtubule plus end conferring a structural polarity. Microtubules usually have 13 protofilaments but different protofilament numbers can be found in some organisms and specialized cells. Requires Mg(2+) as cofactor.

It localises to the cytoplasm. It is found in the cytoskeleton. In terms of biological role, tubulin is the major constituent of microtubules, a cylinder consisting of laterally associated linear protofilaments composed of alpha- and beta-tubulin heterodimers. Microtubules grow by the addition of GTP-tubulin dimers to the microtubule end, where a stabilizing cap forms. Below the cap, tubulin dimers are in GDP-bound state, owing to GTPase activity of alpha-tubulin. This Gossypium hirsutum (Upland cotton) protein is Tubulin beta-9 chain.